Here is a 122-residue protein sequence, read N- to C-terminus: MALTNEDIINAVSEMSVMQIVELIKAMEEKFGVTAAAAVAAGPAAAAPVAEEQTEFTVVLAEAGDKKVNVIKVVRELTGLGLKEAKAVVDGAPGVVKEGISKDEAEAAKKALEEAGAKVELK.

The protein belongs to the bacterial ribosomal protein bL12 family. In terms of assembly, homodimer. Part of the ribosomal stalk of the 50S ribosomal subunit. Forms a multimeric L10(L12)X complex, where L10 forms an elongated spine to which 2 to 4 L12 dimers bind in a sequential fashion. Binds GTP-bound translation factors.

In terms of biological role, forms part of the ribosomal stalk which helps the ribosome interact with GTP-bound translation factors. Is thus essential for accurate translation. The chain is Large ribosomal subunit protein bL12 from Azotobacter vinelandii (strain DJ / ATCC BAA-1303).